Consider the following 208-residue polypeptide: Uracil phosphoribosyltransferase (208 aa).

Residues arginine 78, arginine 103, and 130 to 138 (DPMLATGGS) each bind 5-phospho-alpha-D-ribose 1-diphosphate. Uracil contacts are provided by residues isoleucine 193 and 198–200 (GDA). Aspartate 199 serves as a coordination point for 5-phospho-alpha-D-ribose 1-diphosphate.

This sequence belongs to the UPRTase family. It depends on Mg(2+) as a cofactor.

It catalyses the reaction UMP + diphosphate = 5-phospho-alpha-D-ribose 1-diphosphate + uracil. The protein operates within pyrimidine metabolism; UMP biosynthesis via salvage pathway; UMP from uracil: step 1/1. With respect to regulation, allosterically activated by GTP. Its function is as follows. Catalyzes the conversion of uracil and 5-phospho-alpha-D-ribose 1-diphosphate (PRPP) to UMP and diphosphate. This Yersinia pestis protein is Uracil phosphoribosyltransferase.